The following is a 279-amino-acid chain: 3-methyl-2-oxobutanoate hydroxymethyltransferase (279 aa).

Residues D43 and D82 each coordinate Mg(2+). 3-methyl-2-oxobutanoate contacts are provided by residues 43–44 (DS), D82, and K112. Position 114 (E114) interacts with Mg(2+). E181 (proton acceptor) is an active-site residue.

It belongs to the PanB family. In terms of assembly, homodecamer; pentamer of dimers. Mg(2+) is required as a cofactor.

The protein localises to the cytoplasm. It carries out the reaction 3-methyl-2-oxobutanoate + (6R)-5,10-methylene-5,6,7,8-tetrahydrofolate + H2O = 2-dehydropantoate + (6S)-5,6,7,8-tetrahydrofolate. The protein operates within cofactor biosynthesis; (R)-pantothenate biosynthesis; (R)-pantoate from 3-methyl-2-oxobutanoate: step 1/2. Functionally, catalyzes the reversible reaction in which hydroxymethyl group from 5,10-methylenetetrahydrofolate is transferred onto alpha-ketoisovalerate to form ketopantoate. The chain is 3-methyl-2-oxobutanoate hydroxymethyltransferase from Lysinibacillus sphaericus (strain C3-41).